A 262-amino-acid polypeptide reads, in one-letter code: 14-3-3 protein epsilon (262 aa).

The disordered stretch occupies residues 236 to 262 (QAEEVDPNAGDGEPKEQIQDVEDQDVS). A Phosphoserine modification is found at Ser262.

Belongs to the 14-3-3 family. As to quaternary structure, homodimer. Interacts with phosphorylated yki. Interacts with pav (when serine phosphorylated); the interaction is necessary for association of the complex pav-14-3-3epsilon complex to the microtubules, thereby inhibiting microtubule sliding.

Functionally, positively regulates Ras-mediated pathways. Acts downstream or parallel to Raf, but upstream of nuclear factors in Ras signaling. Three mutants have been isolated, that suppress the rough eye phenotype caused by mutated Ras1 (sev-Ras1 v12). Inhibits yki activity by restricting its nuclear localization. Together with pav, has a role in the inhibition of microtubule sliding during neurite outgrowth. The polypeptide is 14-3-3 protein epsilon (14-3-3epsilon) (Drosophila melanogaster (Fruit fly)).